Consider the following 146-residue polypeptide: Large ribosomal subunit protein uL15 (146 aa).

A disordered region spans residues 1–51 (MQLNTIKPAEGSKKNRRHVGRGIGSGLGKTAGRGHKGQKSRSGGFHKVGFE). The segment covering 21–31 (RGIGSGLGKTA) has biased composition (gly residues).

Belongs to the universal ribosomal protein uL15 family. In terms of assembly, part of the 50S ribosomal subunit.

In terms of biological role, binds to the 23S rRNA. This chain is Large ribosomal subunit protein uL15, found in Polynucleobacter necessarius subsp. necessarius (strain STIR1).